The chain runs to 513 residues: GMP synthase [glutamine-hydrolyzing] (513 aa).

One can recognise a Glutamine amidotransferase type-1 domain in the interval 9–198 (LILVLDFGSQ…VRRVCDCIGE (190 aa)). C86 acts as the Nucleophile in catalysis. Residues H172 and E174 contribute to the active site. The GMPS ATP-PPase domain maps to 199 to 388 (WSMENFIEIE…LGIPEHLVWR (190 aa)). 226–232 (SGGVDSS) serves as a coordination point for ATP.

As to quaternary structure, homodimer.

It catalyses the reaction XMP + L-glutamine + ATP + H2O = GMP + L-glutamate + AMP + diphosphate + 2 H(+). It participates in purine metabolism; GMP biosynthesis; GMP from XMP (L-Gln route): step 1/1. Catalyzes the synthesis of GMP from XMP. The sequence is that of GMP synthase [glutamine-hydrolyzing] from Staphylococcus saprophyticus subsp. saprophyticus (strain ATCC 15305 / DSM 20229 / NCIMB 8711 / NCTC 7292 / S-41).